The sequence spans 73 residues: MSLELLSKLETKIQATLETIELLKMELEEEKQKTSALNEQNQQLSEQNQQLQQELASWNDKVTGLVGLLNSEI.

A coiled-coil region spans residues 3–67 (LELLSKLETK…WNDKVTGLVG (65 aa)).

It belongs to the ZapB family. As to quaternary structure, homodimer. The ends of the coiled-coil dimer bind to each other, forming polymers. Interacts with FtsZ.

The protein localises to the cytoplasm. Its function is as follows. Non-essential, abundant cell division factor that is required for proper Z-ring formation. It is recruited early to the divisome by direct interaction with FtsZ, stimulating Z-ring assembly and thereby promoting cell division earlier in the cell cycle. Its recruitment to the Z-ring requires functional FtsA or ZipA. The sequence is that of Cell division protein ZapB from Shewanella sp. (strain ANA-3).